Here is a 364-residue protein sequence, read N- to C-terminus: MSSFFLSISPLVLALFHVVVQVCSQSCQVAISELQSERKVIILNSDKRSLKQPSNGKYSWKSGESIYFICGKDLKTLTCSPSSINAKRFDCVKPPDVTERDINRECNGKSSKTFQMGFRASGGLFVPYYELCYLMDTCSVSHVKHRLLGASFGGVSGTREKSFQSFVCPGLRYNTHYTQASQKQPDPRFYFQRGHLFPDRDAPVFAWKLATYSYGNCVPQWNTINSEGGNWWTLEYLVFKYAQQTPNTEYTIYDGVLYDPRNKQYLAKQEKKIEIPVWFWKVVTNQTHVLKVFFVSHNLKGTKQTFCNTNRCVNDRAKGTKTVETWDFYNEASRGITHCCYWKDLARKNPLPIEVQREINNKKN.

Positions Met-1 to Ser-24 are cleaved as a signal peptide. N-linked (GlcNAc...) asparagine glycosylation is present at Asn-285.

The protein belongs to the DNA/RNA non-specific endonuclease family. Requires Mg(2+) as cofactor. Saliva (at protein level). Female salivary gland.

The protein localises to the secreted. Functionally, hydrolyzes double-stranded DNA with no sequence specificity. Does not cleave ssDNA and RNA. May facilitate blood meal intake by lowering the local viscosity created by the release of host DNA. This Culex quinquefasciatus (Southern house mosquito) protein is Salivary endonuclease.